Consider the following 520-residue polypeptide: Maturase K (520 aa).

The protein belongs to the intron maturase 2 family. MatK subfamily.

Its subcellular location is the plastid. It localises to the chloroplast. Usually encoded in the trnK tRNA gene intron. Probably assists in splicing its own and other chloroplast group II introns. The protein is Maturase K of Beaucarnea recurvata (Elephant-foot tree).